Consider the following 468-residue polypeptide: Probable Xaa-Pro aminopeptidase PEPP (468 aa).

Residues Asp264, Asp275, Glu398, and Glu438 each contribute to the Mn(2+) site.

The protein belongs to the peptidase M24B family. Mn(2+) serves as cofactor.

The enzyme catalyses Release of any N-terminal amino acid, including proline, that is linked to proline, even from a dipeptide or tripeptide.. In terms of biological role, catalyzes the removal of a penultimate prolyl residue from the N-termini of peptides. In Paracoccidioides lutzii (strain ATCC MYA-826 / Pb01) (Paracoccidioides brasiliensis), this protein is Probable Xaa-Pro aminopeptidase PEPP (PEPP).